The chain runs to 202 residues: Transmembrane gamma-carboxyglutamic acid protein 2 (202 aa).

The first 23 residues, 1-23 (MRGHPSLLLLYMALTTCLDTSPS), serve as a signal peptide directing secretion. The propeptide occupies 24–49 (EETDQEVFLGPPEAQSFLSSHTRIPR). The Gla domain occupies 50-96 (ANHWDLELLTPGNLERECLEERCSWEEAREYFEDNTLTERFWESYIY). The Extracellular segment spans residues 50-109 (ANHWDLELLTPGNLERECLEERCSWEEAREYFEDNTLTERFWESYIYNGKGGRGRVDVAS). Cys67 and Cys72 are oxidised to a cystine. The residue at position 70 (Glu70) is a 4-carboxyglutamate. A helical membrane pass occupies residues 110 to 130 (LAVGLTGGILLIVLAGLGAFW). At 131–202 (YLRWRQHRGQ…PPYTSLRRPH (72 aa)) the chain is on the cytoplasmic side. Residues 143–202 (CPQEAGLISPLSPLNPLGPPTPLPPPPPPPPGLPTYEQALAASGVHDAPPPPYTSLRRPH) are disordered. Over residues 158 to 175 (PLGPPTPLPPPPPPPPGL) the composition is skewed to pro residues. The short motif at 175-178 (LPTY) is the LPXY motif; mediates binding to WW domain-containing proteins element. Positions 192–195 (PPPY) match the PPXY motif; mediates binding to WW domain-containing proteins motif.

Interacts with NEDD4. Interacts (via cytoplasmic domain) with transcriptional coactivator YAP1. Gamma-carboxyglutamate residues are formed by vitamin K dependent carboxylation. These residues are essential for the binding of calcium. As to expression, widely expressed with highest levels in kidney. Also highly expressed in the thyroid.

The protein localises to the cell membrane. In Homo sapiens (Human), this protein is Transmembrane gamma-carboxyglutamic acid protein 2.